A 527-amino-acid chain; its full sequence is Bifunctional purine biosynthesis protein PurH (527 aa).

An MGS-like domain is found at 9 to 156 (MARKPIRRAL…KNHPSVAVVT (148 aa)).

The protein belongs to the PurH family.

The enzyme catalyses (6R)-10-formyltetrahydrofolate + 5-amino-1-(5-phospho-beta-D-ribosyl)imidazole-4-carboxamide = 5-formamido-1-(5-phospho-D-ribosyl)imidazole-4-carboxamide + (6S)-5,6,7,8-tetrahydrofolate. The catalysed reaction is IMP + H2O = 5-formamido-1-(5-phospho-D-ribosyl)imidazole-4-carboxamide. The protein operates within purine metabolism; IMP biosynthesis via de novo pathway; 5-formamido-1-(5-phospho-D-ribosyl)imidazole-4-carboxamide from 5-amino-1-(5-phospho-D-ribosyl)imidazole-4-carboxamide (10-formyl THF route): step 1/1. It participates in purine metabolism; IMP biosynthesis via de novo pathway; IMP from 5-formamido-1-(5-phospho-D-ribosyl)imidazole-4-carboxamide: step 1/1. The sequence is that of Bifunctional purine biosynthesis protein PurH from Mycobacterium leprae (strain Br4923).